A 123-amino-acid polypeptide reads, in one-letter code: Protein Wnt-3a (123 aa).

A lipid anchor (O-palmitoleoyl serine) is attached at Ser1. A disulfide bridge links Cys89 with Cys104. N-linked (GlcNAc...) asparagine glycosylation occurs at Asn90.

Belongs to the Wnt family. In terms of processing, disulfide bonds have critical and distinct roles in secretion and activity. Loss of each conserved cysteine results in high molecular weight oxidized Wnt oligomers, which are formed through inter-Wnt disulfide bonding. Palmitoleoylation is required for efficient binding to frizzled receptors. Depalmitoleoylation leads to Wnt signaling pathway inhibition.

It localises to the secreted. It is found in the extracellular space. Its subcellular location is the extracellular matrix. Functionally, ligand for members of the frizzled family of seven transmembrane receptors. Functions in the canonical Wnt signaling pathway that results in activation of transcription factors of the TCF/LEF family. Required for normal embryonic mesoderm development and formation of caudal somites. Required for normal morphogenesis of the developing neural tube. This chain is Protein Wnt-3a (WNT-3A), found in Pituophis melanoleucus (Pine snake).